Consider the following 133-residue polypeptide: MSGKGKVHGGKGKSSEIAKSSTSHSARAGLQFPVGRVKRYLKKQAQNKIRVGSKAAIYLTAVLEYLTAEVLELAGNAAKDLKVKRITPRHLQLAIRGDEELDNLIKATIAYGGVLPHINKALLLKVEKKKSHK.

Residues 1-11 (MSGKGKVHGGK) are compositionally biased toward basic residues. A disordered region spans residues 1 to 30 (MSGKGKVHGGKGKSSEIAKSSTSHSARAGL). Residue S2 is modified to N-acetylserine. N6-acetyllysine occurs at positions 4, 11, and 13.

This sequence belongs to the histone H2A family. The nucleosome is a histone octamer containing two molecules each of H2A, H2B, H3 and H4 assembled in one H3-H4 heterotetramer and two H2A-H2B heterodimers. The octamer wraps approximately 147 bp of DNA. H2A or its variant H2A.Z forms a heterodimer with H2B. H2A.Z associates with the VPS72/SWC2 subunit of the SWR1 chromatin remodeling complex. Also interacts with RBP1/DNA-directed RNA polymerase II largest subunit. Acetylated once deposited into chromatin.

It is found in the nucleus. It localises to the chromosome. Functionally, variant histone H2A which can replace H2A in some nucleosomes. Nucleosomes wrap and compact DNA into chromatin, limiting DNA accessibility to the cellular machineries which require DNA as a template. Histones thereby play a central role in transcription regulation, DNA repair, DNA replication and chromosomal stability. DNA accessibility is regulated via a complex set of post-translational modifications of histones, also called histone code, and nucleosome remodeling. This variant is enriched at promoters, it may keep them in a repressed state until the appropriate activation signal is received. Near telomeres, it may counteract gene silencing caused by the spread of heterochromatin proteins. Required for the RNA polymerase II and SPT15/TBP recruitment to the target genes. Involved in chromosome stability. The polypeptide is Histone H2A.Z (HTZ1) (Lodderomyces elongisporus (strain ATCC 11503 / CBS 2605 / JCM 1781 / NBRC 1676 / NRRL YB-4239) (Yeast)).